The sequence spans 411 residues: Serine--tRNA ligase (411 aa).

226-228 (TSE) serves as a coordination point for L-serine. 257-259 (RKE) provides a ligand contact to ATP. Glutamate 280 provides a ligand contact to L-serine. Position 344 to 347 (344 to 347 (EISS)) interacts with ATP. L-serine is bound at residue serine 379.

Belongs to the class-II aminoacyl-tRNA synthetase family. Type-1 seryl-tRNA synthetase subfamily. As to quaternary structure, homodimer. The tRNA molecule binds across the dimer.

It localises to the cytoplasm. It catalyses the reaction tRNA(Ser) + L-serine + ATP = L-seryl-tRNA(Ser) + AMP + diphosphate + H(+). The catalysed reaction is tRNA(Sec) + L-serine + ATP = L-seryl-tRNA(Sec) + AMP + diphosphate + H(+). The protein operates within aminoacyl-tRNA biosynthesis; selenocysteinyl-tRNA(Sec) biosynthesis; L-seryl-tRNA(Sec) from L-serine and tRNA(Sec): step 1/1. Its function is as follows. Catalyzes the attachment of serine to tRNA(Ser). Is also able to aminoacylate tRNA(Sec) with serine, to form the misacylated tRNA L-seryl-tRNA(Sec), which will be further converted into selenocysteinyl-tRNA(Sec). This Campylobacter jejuni subsp. doylei (strain ATCC BAA-1458 / RM4099 / 269.97) protein is Serine--tRNA ligase.